The primary structure comprises 524 residues: Cytochrome P450 4F11 (524 aa).

The helical transmembrane segment at 15–37 (AASPWLLLLLVGGSWLLARVLAW) threads the bilayer. 2 positions are modified to 4-hydroxynonenal-conjugated cysteine: Cys-45 and Cys-260. His-261 carries the post-translational modification 4-hydroxynonenal-conjugated histidine. Glu-328 serves as a coordination point for heme. At His-347 the chain carries 4-hydroxynonenal-conjugated histidine. Residue Cys-354 is modified to 4-hydroxynonenal-conjugated cysteine. Lys-451 carries the 4-hydroxynonenal-conjugated lysine modification. Residue Cys-468 coordinates heme.

Belongs to the cytochrome P450 family. Requires heme as cofactor. Post-translationally, 4-hydroxynonenal conjugation impairs substrate binding and the long-chain fatty acid omega-monooxygenase activity. As to expression, expressed mainly in human liver, followed by kidney, heart, and skeletal muscle.

It localises to the endoplasmic reticulum membrane. The protein localises to the microsome membrane. It catalyses the reaction an organic molecule + reduced [NADPH--hemoprotein reductase] + O2 = an alcohol + oxidized [NADPH--hemoprotein reductase] + H2O + H(+). The catalysed reaction is an omega-methyl-long-chain fatty acid + reduced [NADPH--hemoprotein reductase] + O2 = an omega-hydroxy-long-chain fatty acid + oxidized [NADPH--hemoprotein reductase] + H2O + H(+). It carries out the reaction dodecanoate + reduced [NADPH--hemoprotein reductase] + O2 = 12-hydroxydodecanoate + oxidized [NADPH--hemoprotein reductase] + H2O + H(+). The enzyme catalyses hexadecanoate + reduced [NADPH--hemoprotein reductase] + O2 = 16-hydroxyhexadecanoate + oxidized [NADPH--hemoprotein reductase] + H2O + H(+). It catalyses the reaction (9Z)-octadecenoate + reduced [NADPH--hemoprotein reductase] + O2 = 18-hydroxy-(9Z)-octadecenoate + oxidized [NADPH--hemoprotein reductase] + H2O + H(+). The catalysed reaction is (5Z,8Z,11Z,14Z)-eicosatetraenoate + reduced [NADPH--hemoprotein reductase] + O2 = 20-hydroxy-(5Z,8Z,11Z,14Z)-eicosatetraenoate + oxidized [NADPH--hemoprotein reductase] + H2O + H(+). It carries out the reaction (4Z,7Z,10Z,13Z,16Z,19Z)-docosahexaenoate + reduced [NADPH--hemoprotein reductase] + O2 = 22-hydroxy-(4Z,7Z,10Z,13Z,16Z,19Z)-docosahexaenoate + oxidized [NADPH--hemoprotein reductase] + H2O + H(+). The enzyme catalyses 8-hydroxy-(5Z,9E,11Z,14Z)-eicosatetraenoate + reduced [NADPH--hemoprotein reductase] + O2 = 8,20-dihydroxy-(5Z,9E,11Z,14Z)-eicosatetraenoate + oxidized [NADPH--hemoprotein reductase] + H2O + H(+). It catalyses the reaction 3-hydroxyhexadecanoate + reduced [NADPH--hemoprotein reductase] + O2 = 3,16-dihydroxyhexadecanoate + oxidized [NADPH--hemoprotein reductase] + H2O + H(+). The catalysed reaction is 3-hydroxyoctadecanoate + reduced [NADPH--hemoprotein reductase] + O2 = 3,18-dihydroxyoctadecanoate + oxidized [NADPH--hemoprotein reductase] + H2O + H(+). It carries out the reaction phylloquinone + reduced [NADPH--hemoprotein reductase] + O2 = omega-hydroxyphylloquinone + oxidized [NADPH--hemoprotein reductase] + H2O + H(+). The enzyme catalyses menaquinone-4 + reduced [NADPH--hemoprotein reductase] + O2 = omega-hydroxymenaquinone-4 + oxidized [NADPH--hemoprotein reductase] + H2O + H(+). It catalyses the reaction 2-hexyl-5-pentylresorcinol + reduced [NADPH--hemoprotein reductase] + O2 = 2-hexyl-5-(5-hydroxypentyl)resorcinol + oxidized [NADPH--hemoprotein reductase] + H2O + H(+). The catalysed reaction is 2-hexyl-5-heptylresorcinol + reduced [NADPH--hemoprotein reductase] + O2 = 2-hexyl-5-(7-hydroxyheptyl)resorcinol + oxidized [NADPH--hemoprotein reductase] + H2O + H(+). It carries out the reaction 12-hydroxy-(5Z,8Z,10E,14Z)-eicosatetraenoate + reduced [NADPH--hemoprotein reductase] + O2 = 12,20-dihydroxy-(5Z,8Z,10E,14Z)-eicosatetraenoate + oxidized [NADPH--hemoprotein reductase] + H2O + H(+). The enzyme catalyses 15-hydroxy-(5Z,8Z,11Z,13E)-eicosatetraenoate + reduced [NADPH--hemoprotein reductase] + O2 = 15,20-dihydroxy-(5Z,8Z,11Z,13E)-eicosatetraenoate + oxidized [NADPH--hemoprotein reductase] + H2O + H(+). It functions in the pathway lipid metabolism; arachidonate metabolism. The protein operates within lipid metabolism; oxylipin biosynthesis. Its pathway is cofactor degradation; phylloquinone degradation. It participates in xenobiotic degradation. Inhibition of the long-chain fatty acid omega-monooxygenase activity by 4-hydroxynonenal (4-HNE) conjugation. A cytochrome P450 monooxygenase involved in the metabolism of various endogenous substrates, including fatty acids and their oxygenated derivatives (oxylipins). Mechanistically, uses molecular oxygen inserting one oxygen atom into a substrate, and reducing the second into a water molecule, with two electrons provided by NADPH via cytochrome P450 reductase (CPR; NADPH-ferrihemoprotein reductase). Catalyzes with high efficiency the oxidation of the terminal carbon (omega-oxidation) of 3-hydroxy fatty acids, such as 3-hydroxyhexadecanoic and 3-hydroxyoctadecanoic acids, likely participating in the biosynthesis of long-chain 3-hydroxydicarboxylic acids. Omega-hydroxylates and inactivates phylloquinone (vitamin K1), and menaquinone-4 (MK-4, a form of vitamin K2), both acting as cofactors in blood coagulation. Metabolizes with low efficiciency fatty acids, including (5Z,8Z,11Z,14Z)-eicosatetraenoic acid (arachidonate) and its oxygenated metabolite 8-hydroxyeicosatetraenoic acid (8-HETE). Catalyzes N- and O-demethylation of drugs such as erythromycin, benzphetamine, ethylmorphine, chlorpromazine, imipramine and verapamil. Catalyzes the oxidation of dialkylresorcinol 2. This Homo sapiens (Human) protein is Cytochrome P450 4F11.